The following is a 320-amino-acid chain: tRNA-cytidine(32) 2-sulfurtransferase (320 aa).

The PP-loop motif motif lies at 54 to 59 (SGGKDS). The [4Fe-4S] cluster site is built by Cys129, Cys132, and Cys220.

Belongs to the TtcA family. Homodimer. Requires Mg(2+) as cofactor. It depends on [4Fe-4S] cluster as a cofactor.

It is found in the cytoplasm. The catalysed reaction is cytidine(32) in tRNA + S-sulfanyl-L-cysteinyl-[cysteine desulfurase] + AH2 + ATP = 2-thiocytidine(32) in tRNA + L-cysteinyl-[cysteine desulfurase] + A + AMP + diphosphate + H(+). It participates in tRNA modification. In terms of biological role, catalyzes the ATP-dependent 2-thiolation of cytidine in position 32 of tRNA, to form 2-thiocytidine (s(2)C32). The sulfur atoms are provided by the cysteine/cysteine desulfurase (IscS) system. In Bordetella pertussis (strain Tohama I / ATCC BAA-589 / NCTC 13251), this protein is tRNA-cytidine(32) 2-sulfurtransferase.